Consider the following 484-residue polypeptide: Diaminopimelate decarboxylase 1, chloroplastic (484 aa).

The segment covering 1-28 has biased composition (polar residues); the sequence is MAAATQFLSQPSSLNPHQLKNQTSQRSR. The tract at residues 1–30 is disordered; the sequence is MAAATQFLSQPSSLNPHQLKNQTSQRSRSI. The transit peptide at 1–49 directs the protein to the chloroplast; it reads MAAATQFLSQPSSLNPHQLKNQTSQRSRSIPVLSLKSTLKPLKRLSVKA. The residue at position 50 (Ala50) is an N-acetylalanine. N6-(pyridoxal phosphate)lysine is present on Lys125. Pyridoxal 5'-phosphate-binding positions include Gly304 and 340–343; that span reads EPGR. Substrate is bound by residues Arg343, Arg379, and Tyr383. Cys411 serves as the catalytic Proton donor. The substrate site is built by Glu412 and Tyr440. Residue Tyr440 coordinates pyridoxal 5'-phosphate.

The protein belongs to the Orn/Lys/Arg decarboxylase class-II family. LysA subfamily. In terms of assembly, homodimer. Pyridoxal 5'-phosphate serves as cofactor.

It localises to the plastid. The protein localises to the chloroplast. It catalyses the reaction meso-2,6-diaminopimelate + H(+) = L-lysine + CO2. It functions in the pathway amino-acid biosynthesis; L-lysine biosynthesis via DAP pathway; L-lysine from DL-2,6-diaminopimelate: step 1/1. Functionally, specifically catalyzes the decarboxylation of meso-diaminopimelate (meso-DAP) to L-lysine. This Arabidopsis thaliana (Mouse-ear cress) protein is Diaminopimelate decarboxylase 1, chloroplastic (LYSA1).